The primary structure comprises 184 residues: UPF0397 protein SAS2570 (184 aa).

Transmembrane regions (helical) follow at residues 11-31 (VVAI…VVIP), 44-64 (AFLA…TGLV), 77-97 (AWWS…WIGL), 111-131 (MIYF…LIAP), and 148-168 (QGVI…TILL).

It belongs to the UPF0397 family.

It localises to the cell membrane. This chain is UPF0397 protein SAS2570, found in Staphylococcus aureus (strain MSSA476).